Here is a 185-residue protein sequence, read N- to C-terminus: Transposon Tn3 resolvase (185 aa).

The region spanning R2–G137 is the Resolvase/invertase-type recombinase catalytic domain. S10 serves as the catalytic O-(5'-phospho-DNA)-serine intermediate. A DNA-binding region (H-T-H motif) is located at residues A161–E180.

Belongs to the site-specific recombinase resolvase family.

Its function is as follows. Resolvase catalyzes the resolution (a site-specific recombination) of the cointegrated replicon to yield the final transposition products. The sequence is that of Transposon Tn3 resolvase (tnpR) from Escherichia coli.